The chain runs to 362 residues: Peptide chain release factor 1 (362 aa).

Position 236 is an N5-methylglutamine (glutamine 236).

Belongs to the prokaryotic/mitochondrial release factor family. Post-translationally, methylated by PrmC. Methylation increases the termination efficiency of RF1.

Its subcellular location is the cytoplasm. Peptide chain release factor 1 directs the termination of translation in response to the peptide chain termination codons UAG and UAA. In Lactobacillus gasseri (strain ATCC 33323 / DSM 20243 / BCRC 14619 / CIP 102991 / JCM 1131 / KCTC 3163 / NCIMB 11718 / NCTC 13722 / AM63), this protein is Peptide chain release factor 1.